A 2304-amino-acid chain; its full sequence is MKGHQLKSWIFELREILREIKNSHYFLDSWTKLNLVGSFTHIFFHQERFMKLFDPRIWSILLSCDSQSSTSNRYFTIKGVVLLVVAVLIYRINNRNMVERKNLYLMRLLPIPMNSIGPRNDTLEESFLSSNINRLIVSLLYLPKGKKISESCFMDPKESTWLLPITKKCIMPESNWGSRWWRNRIGKKRDSSCKISNETVAGIEISFKEKDIKYLEFLFVSYTDTDDPIRKDHDLELFDRLSPGKKQNIINLNSGQLFEILVKHLICYLMSAFREKRPIEVEGFFKQQGAEATIQSNDIEHVPRLFSGNKNKWGISLQNCAQFHMWQFHQDLFVSWGKNQHESDFLRNVSRENLIWLGSMWLVNKDRFFSKVRNVSSNIQYDSTRSIFVKVTDSSQLKGSSDQSRDHFNSISNEDSEYHTLIHQTEIEQLKERSILWDPSFLQTERTEIESDRFPKCLSGYFSMSRLFTEREKQMNNHLFPEEIEEFIGNPTRSIRSFFSDRWSELHLGSNATERSTRDQKLLKKQQDVSFVPSRRSENKEMVDIFKIITYLQNTVSIHPISSDPGCDMVPKDEPDMDSSNKISFLNKNPFCDLFHLFHGRNKGGYTLHHDFESEERFQERADLFTLSITEPDLMYHKGFAFSIDSYGLDQKKLLNEVFNSRDESKKKSLLVLPHIFYEENESFYRRIRTKSVRISCRNGLEDPKIVVFASNNIMEAVNQYRLIRNLIQIQYSTYGYIRNVSKRFFLMNRSDRNFEYGIQRDQIGNDTLNHITIMKYTINQHLSNLKKSQKKWFDPLISRTERSMNRDPNAYRYKWSNGSKNFQEHLEHFVSEQKNRFQVVFDRLRINQHSIDWSEVIDKQDLSKSLRFFLSKSLLFLSKSLPFFFVSIGNIPIHRSEIHIYELKGPNDQLCNQLLESIGVQIVHLNKLKPFLLDDHDTSQRSKLLINGGTIARFWFNKIPKWMIDSFHTRNNRGKSFENTDSYFSMISHDRDNWLNPVKPFHRSSLISSFYKANQLRFLNNPHHFWFYCNKRFPFYAEKTRINNYDLTYGQFLNISFIRNKIFSLCVGKKKHVFLERDTISPSPIESQVSDIFIPNDFPQSGDETYNLYKSFHFPTRSDPFVRRAIYSIADISGTPLTEEQRVNFEGTYCQPLSDLNLSDSEGKNLHQYLSFNSNMGLIHTPCSEKYLPSGKRKKRNLCLNKCVEKRQMYRTFQRDSAFSNISKWNLFQTYMPWFLTSTGCKYINFILLDTFSDPLPILSSSHKFVSIFHDIMHGSAWSIPQKKLRAILPQWNLISEISSKCLQNLLLSEEMIHRNNESPVPLIWTHLRSPNPREFFYSSLFLLLVAGYLVRTHLLFVSRVSSELHTELEKIKSLMIPSYMMELRKLLDSYPPPELNSFWLKNLFLVALEQLGDSPEEIRGSDSGGNMLLGGGPAYGVKSIRSKKKDLNINLIDIIDLISIIPNPVNPITFSINTRRLSRTSKEIYSLIRKRKNVNSDWIDGKIESWVANSDLIDDEEREFLVQFSALTTEKRIDQILWSLTHSDPFSKNDSGYQMIEQPGSIYLRYLVDIHKKYLMNSEFNRSCLAERRIFLAHYQTITYSQTSCGANSSHFPSHGKPFSLRLDLSPSRGILVIGSIGTGRSYLVKYLATNSYLPSITVSPNKFLDDKPKGYLIDDIDDSDDIDLDDSNSIDDSDDVDIGDSDDIDIDDDLDAELLTMTNVLTMYMTPKMDRFDITPQLELAKAMSPCIIWIPNIHDLYVNESNYLSLGLLVNHLSRDCERCSTRNILVIASTHIPQKVDPALIAPNKSNTCIKIRRLLIPQQRKHFFILSYTRGFHLEKKMFHTNGFGSITMGSNARDLVALTNEALSISITQKKSIIDTNTIRSALHRQTWDLRSQVRSVQDHGILFYQIGRSFAQNVLLSNCSIDPISTYMKKKSCKEGDSYLYKWYFELGTSIKKLTTLLYLLSCSAGSVAQDLWSPPGPDEKNWITSYGFVENDSDLVHGLLEGALVGSSRTEKDCSQFDNDRVTLLLRSEPRNPLDMMQNGSCSIVDQRFLYEKYESEFEEGEGEGTLDPQQIEEDLFNHIVWAPRIWRPCGNLFDCIERPNESRFPYRSRSFRGKQIISHKEDELQENDLEFLQSGTMQYQTRDRSSKEQGFFQISQFIWDPADPFFFLFKDQPFVSVFARREFFADEEMSKGLITSQTHSPTSIYERWLIKNTQEKHFELLIHRQRWLSTNSSLSNGSFRSNTPSESYQYLSNLFLSNGTLLDQMAKTLLRKRWLFPDEMKHLIHVTGERFPIP.

1637–1644 (GSIGTGRS) is an ATP binding site.

This sequence belongs to the Ycf2 family.

The protein localises to the plastid. Its subcellular location is the chloroplast stroma. Probable ATPase of unknown function. Its presence in a non-photosynthetic plant (Epifagus virginiana) and experiments in tobacco indicate that it has an essential function which is probably not related to photosynthesis. The polypeptide is Protein Ycf2 (Amborella trichopoda).